The sequence spans 626 residues: NAD-dependent malic enzyme, mitochondrial (626 aa).

The transit peptide at 1–34 (MAIFSNQMRLSSTLLKRLHQRVAAAVNSSSSRNF) directs the protein to the mitochondrion. Arg-91 and Arg-125 together coordinate fumarate. Catalysis depends on Tyr-146, which acts as the Proton donor. Arg-199 contributes to the (S)-malate binding site. Arg-199 provides a ligand contact to NAD(+). Catalysis depends on Lys-217, which acts as the Proton acceptor. Residues Glu-288, Asp-289, and Asp-312 each coordinate a divalent metal cation. Residues Ala-348 and Ala-351 each coordinate NAD(+). (S)-malate contacts are provided by Asn-467 and Asn-512.

It belongs to the malic enzymes family. In terms of assembly, heterodimer of two related subunits. Mg(2+) serves as cofactor. Mn(2+) is required as a cofactor.

The protein localises to the mitochondrion matrix. The enzyme catalyses (S)-malate + NAD(+) = pyruvate + CO2 + NADH. This chain is NAD-dependent malic enzyme, mitochondrial, found in Solanum tuberosum (Potato).